Consider the following 487-residue polypeptide: Protein nucleotidyltransferase YdiU (487 aa).

The ATP site is built by glycine 90, glycine 92, arginine 93, lysine 113, aspartate 125, glycine 126, arginine 176, and arginine 183. The active-site Proton acceptor is the aspartate 252. Residues asparagine 253 and aspartate 262 each contribute to the Mg(2+) site. Aspartate 262 is a binding site for ATP.

This sequence belongs to the SELO family. It depends on Mg(2+) as a cofactor. Mn(2+) is required as a cofactor.

It carries out the reaction L-seryl-[protein] + ATP = 3-O-(5'-adenylyl)-L-seryl-[protein] + diphosphate. It catalyses the reaction L-threonyl-[protein] + ATP = 3-O-(5'-adenylyl)-L-threonyl-[protein] + diphosphate. The catalysed reaction is L-tyrosyl-[protein] + ATP = O-(5'-adenylyl)-L-tyrosyl-[protein] + diphosphate. The enzyme catalyses L-histidyl-[protein] + UTP = N(tele)-(5'-uridylyl)-L-histidyl-[protein] + diphosphate. It carries out the reaction L-seryl-[protein] + UTP = O-(5'-uridylyl)-L-seryl-[protein] + diphosphate. It catalyses the reaction L-tyrosyl-[protein] + UTP = O-(5'-uridylyl)-L-tyrosyl-[protein] + diphosphate. Nucleotidyltransferase involved in the post-translational modification of proteins. It can catalyze the addition of adenosine monophosphate (AMP) or uridine monophosphate (UMP) to a protein, resulting in modifications known as AMPylation and UMPylation. The polypeptide is Protein nucleotidyltransferase YdiU (Azotobacter vinelandii (strain DJ / ATCC BAA-1303)).